The primary structure comprises 234 residues: Kappa-casein (234 aa).

The signal sequence occupies residues 1–21; that stretch reads MMKSFLLVVNIVALTLPFLAA. 3 consecutive repeat copies span residues 127–153, 154–179, and 180–207. Residues 127-207 form a 3 X 27 AA tandem repeats region; it reads LGKATILSTD…AVPSEEPRES (81 aa). The disordered stretch occupies residues 143 to 234; the sequence is QTPVSAAQPT…STGPAIASMA (92 aa). O-linked (GalNAc...) threonine glycosylation is present at Thr-144. Polar residues predominate over residues 144–171; it reads TPVSAAQPTVSAGDTPEVSSQFIDTPDT. A Phosphothreonine modification is found at Thr-158. Position 162 is a phosphoserine; alternate (Ser-162). The O-linked (GalNAc...) serine; alternate glycan is linked to Ser-162.

This sequence belongs to the kappa-casein family. In terms of tissue distribution, mammary gland specific. Secreted in milk.

Its subcellular location is the secreted. Kappa-casein stabilizes micelle formation, preventing casein precipitation in milk. The polypeptide is Kappa-casein (CSN3) (Cavia porcellus (Guinea pig)).